The chain runs to 252 residues: Cytochrome c oxidase subunit 2 (252 aa).

The Mitochondrial intermembrane portion of the chain corresponds to 1-39 (MFLIMLKGHILMDAPTPWGIFFQDSASPQMEGIMELHNN). Residues 40-59 (IMFYLAIILFTVTWMMITII) traverse the membrane as a helical segment. The Mitochondrial matrix segment spans residues 60–81 (RNFVAKKSPIAHKYMNHGTLIE). The chain crosses the membrane as a helical span at residues 82-105 (LIWTITPAFILILIAFPSFKLLYL). Over 106–252 (MDEVMDPSLV…LLWLRDQMEG (147 aa)) the chain is Mitochondrial intermembrane. Residues H184, C219, E221, C223, H227, and M230 each coordinate Cu cation. A Mg(2+)-binding site is contributed by E221.

This sequence belongs to the cytochrome c oxidase subunit 2 family. In terms of assembly, component of the cytochrome c oxidase (complex IV, CIV), a multisubunit enzyme composed of a catalytic core of 3 subunits and several supernumerary subunits. The complex exists as a monomer or a dimer and forms supercomplexes (SCs) in the inner mitochondrial membrane with ubiquinol-cytochrome c oxidoreductase (cytochrome b-c1 complex, complex III, CIII). Cu cation serves as cofactor.

The protein resides in the mitochondrion inner membrane. The enzyme catalyses 4 Fe(II)-[cytochrome c] + O2 + 8 H(+)(in) = 4 Fe(III)-[cytochrome c] + 2 H2O + 4 H(+)(out). In terms of biological role, component of the cytochrome c oxidase, the last enzyme in the mitochondrial electron transport chain which drives oxidative phosphorylation. The respiratory chain contains 3 multisubunit complexes succinate dehydrogenase (complex II, CII), ubiquinol-cytochrome c oxidoreductase (cytochrome b-c1 complex, complex III, CIII) and cytochrome c oxidase (complex IV, CIV), that cooperate to transfer electrons derived from NADH and succinate to molecular oxygen, creating an electrochemical gradient over the inner membrane that drives transmembrane transport and the ATP synthase. Cytochrome c oxidase is the component of the respiratory chain that catalyzes the reduction of oxygen to water. Electrons originating from reduced cytochrome c in the intermembrane space (IMS) are transferred via the dinuclear copper A center (CU(A)) of subunit 2 and heme A of subunit 1 to the active site in subunit 1, a binuclear center (BNC) formed by heme A3 and copper B (CU(B)). The BNC reduces molecular oxygen to 2 water molecules using 4 electrons from cytochrome c in the IMS and 4 protons from the mitochondrial matrix. The protein is Cytochrome c oxidase subunit 2 (cox2) of Emericella nidulans (Aspergillus nidulans).